The chain runs to 296 residues: MKNEKIVVLYGGDSPEREVSLKSGKAVLDSLISQGYDAVGVDASGKELVAKLLELKPDKCFVALHGEDGENGRVSALLEMLEIKHTSSSMKSSVITMDKMISKEILMHHRMPTPMAKFLTDKLVAEDEISFPVAVKPSSGGSSIATFKVKSIQELKHAYEEASKYGEVMIEQWVTGKEITVAIVNDEVYSSVWIEPQNEFYDYESKYSGKSIYHSPSGLCEQKELEVRQLAKKAYDLLGCSGHARVDFIYDDRGNFYIMEINSSPGMTDNSLSPKSAAAEGVDFDSFVKRIIEQAQ.

The 191-residue stretch at 103–293 (KEILMHHRMP…FDSFVKRIIE (191 aa)) folds into the ATP-grasp domain. 129–180 (ISFPVAVKPSSGGSSIATFKVKSIQELKHAYEEASKYGEVMIEQWVTGKEIT) serves as a coordination point for ATP. Residues Asp247, Glu260, and Asn262 each contribute to the Mg(2+) site.

It belongs to the D-alanine--D-alanine ligase family. The cofactor is Mg(2+). Mn(2+) is required as a cofactor.

The protein resides in the cytoplasm. The enzyme catalyses 2 D-alanine + ATP = D-alanyl-D-alanine + ADP + phosphate + H(+). It functions in the pathway cell wall biogenesis; peptidoglycan biosynthesis. Cell wall formation. In Francisella tularensis subsp. tularensis (strain FSC 198), this protein is D-alanine--D-alanine ligase.